The primary structure comprises 252 residues: C-type lectin domain family 2 member D3 (252 aa).

The tract at residues 1–58 (MSSSAHLQDAPPLLSGTLTQNEGQTSLRQSSSCGPSAASASESLSGYTESRIPHSKVR) is disordered. Residues 1–78 (MSSSAHLQDA…ESRVKRYCCY (78 aa)) are Cytoplasmic-facing. Residues 16–29 (GTLTQNEGQTSLRQ) are compositionally biased toward polar residues. Residues 30-43 (SSSCGPSAASASES) show a composition bias toward low complexity. A helical; Signal-anchor for type II membrane protein membrane pass occupies residues 79 to 99 (GGVITVVAIAIVVPLSVTLSV). The Extracellular segment spans residues 100–252 (KQMEQTSINN…KPKKYISQSQ (153 aa)). The C-type lectin domain occupies 137-242 (YGNKCFYFSE…VYVERPWICS (106 aa)). A glycan (N-linked (GlcNAc...) asparagine) is linked at N150. An intrachain disulfide couples C158 to C241.

Its subcellular location is the cell membrane. Functionally, lectin-type cell surface receptor. This chain is C-type lectin domain family 2 member D3 (Clec2d3), found in Rattus norvegicus (Rat).